Consider the following 402-residue polypeptide: MIDRQKVISELISPNTSKIVLLVMDGIGDIPNEEGLTPLQKANTPNLDALAKKSDLGQTIPVLPGITPGSGPGHLGLFGYDPLKYQIGRGILEALGINVEVGENDLVARGNFATIDGDIIVDRRAGRPSSEESAKVVEILNENIKEIEDVKITFYPGKEHRFVVKFTGEGLMDKLEDADPQKEGKPIKYTKALDESSKKSERIVNILLDKIKEVLKDQPKMNFALLRGFSKHPDMPKFGDVFKLKPAAVAVYPMYKGLAKLVGMEVVEAGQTIEDEFNTVKKLWNEYDFFYVHIKKTDSYGEDGNFDSKVKVIEEVDKFLPILLELNPDVLIVTGDHSTPCVMKGHSFHPVPLMIYAKNTRRGLSKLFNEFECARGSLGTIHAVDVMPLALAYAGRLEKYGA.

It belongs to the BPG-independent phosphoglycerate mutase family. A-PGAM subfamily.

The catalysed reaction is (2R)-2-phosphoglycerate = (2R)-3-phosphoglycerate. It participates in carbohydrate degradation; glycolysis; pyruvate from D-glyceraldehyde 3-phosphate: step 3/5. Functionally, catalyzes the interconversion of 2-phosphoglycerate and 3-phosphoglycerate. The protein is Probable 2,3-bisphosphoglycerate-independent phosphoglycerate mutase of Thermosipho africanus (strain TCF52B).